Reading from the N-terminus, the 513-residue chain is NAD(P)H-quinone oxidoreductase subunit 2 (513 aa).

A run of 14 helical transmembrane segments spans residues 12 to 32, 41 to 61, 77 to 97, 104 to 124, 130 to 150, 165 to 185, 199 to 219, 238 to 258, 272 to 292, 300 to 320, 328 to 348, 372 to 392, 394 to 414, and 456 to 476; these read TLWPEYIVTITLIVVLLVDLI, LPYLALLGLGIATATLLPMWI, LSVVFRAFILISAALTVLMSV, SLATAEFYVLLLGATLGAMLL, MAMIFVALELLSITSYLLSGY, LLIGAASSGIFLYGMSLLYGF, IVNLGFPALLSLVLVAAGICF, PTPVVAFLSVGSKAAGFALAI, WQTLFVLLAILSMVLGNVVAI, MLAYSSIAQAGYVMIGLAIGT, ILYIGTYLFMNLGAFMAVVLF, LVLSLCLLSLAGIPPLAGFFG, LYLFWAAVQSQAYTLVFFGLV, and AGMLITTVATVVLGILFPPLI. Positions 494–505 are enriched in polar residues; sequence TATPVSRVSTGA. Positions 494–513 are disordered; the sequence is TATPVSRVSTGAQAPADHGR.

The protein belongs to the complex I subunit 2 family. NDH-1 can be composed of about 15 different subunits; different subcomplexes with different compositions have been identified which probably have different functions.

The protein resides in the cell inner membrane. The catalysed reaction is a plastoquinone + NADH + (n+1) H(+)(in) = a plastoquinol + NAD(+) + n H(+)(out). The enzyme catalyses a plastoquinone + NADPH + (n+1) H(+)(in) = a plastoquinol + NADP(+) + n H(+)(out). NDH-1 shuttles electrons from an unknown electron donor, via FMN and iron-sulfur (Fe-S) centers, to quinones in the respiratory and/or the photosynthetic chain. The immediate electron acceptor for the enzyme in this species is believed to be plastoquinone. Couples the redox reaction to proton translocation, and thus conserves the redox energy in a proton gradient. Cyanobacterial NDH-1 also plays a role in inorganic carbon-concentration. The chain is NAD(P)H-quinone oxidoreductase subunit 2 from Gloeobacter violaceus (strain ATCC 29082 / PCC 7421).